Reading from the N-terminus, the 443-residue chain is Trigger factor (443 aa).

Residues 163-248 (GDTAVIDFEG…INEIKAKELP (86 aa)) enclose the PPIase FKBP-type domain.

Belongs to the FKBP-type PPIase family. Tig subfamily.

It localises to the cytoplasm. It carries out the reaction [protein]-peptidylproline (omega=180) = [protein]-peptidylproline (omega=0). Its function is as follows. Involved in protein export. Acts as a chaperone by maintaining the newly synthesized protein in an open conformation. Functions as a peptidyl-prolyl cis-trans isomerase. The chain is Trigger factor from Agathobacter rectalis (strain ATCC 33656 / DSM 3377 / JCM 17463 / KCTC 5835 / VPI 0990) (Eubacterium rectale).